The chain runs to 408 residues: MVFISTKEFNNMEYGTILINAIDAIDSDNNSKLLIDDQVVEIFRKESSSYEHTDHGRLIIVVVENSRKIERRSPTFSYSEKGKGIPFKIDKIPFEFKKKKFIDNLSSMSYHEISLKYNDDDKPNQVVLRHFYKNSLQMGFFNCTLLFRSSPKTTSKTFTKRPELMLTIVDSSGQLIKTIYINRDENNNNSNNNNNNNSNNNSSILFNSSDSLETTLTTSSSSSTSTNQNSNSFNNLLSLLPSLNLQIQSQLINNNKTNNNNNCDVIINNDNGNNNNNNNNNNNNNNNNNNNNNNNNNNNNNNNNNNNNNNNNNSSDSIIVNDNYFNNDNSNDIIVNVNNNFNNNNPNCNIDNGNFIYFNNHDNDNNNKLDYYDELYSIYNIGGQTFDYDICNINNNYFNFNEINMIQN.

Disordered stretches follow at residues 184–206 (DENNNNSNNNNNNNSNNNSSILF) and 254–317 (NNKT…SSDS). The span at 187–206 (NNNSNNNNNNNSNNNSSILF) shows a compositional bias: low complexity.

This is an uncharacterized protein from Dictyostelium discoideum (Social amoeba).